The sequence spans 520 residues: Sterile alpha motif domain-containing protein 3 (520 aa).

Positions 4–71 (WSVEQVCSWL…KYKQNTQGLK (68 aa)) constitute an SAM domain. A disordered region spans residues 85–114 (TEAARDYRDEESSSPARHGEQMPSFYPAEN).

This is Sterile alpha motif domain-containing protein 3 (SAMD3) from Homo sapiens (Human).